A 173-amino-acid chain; its full sequence is Alpha-crystallin A chain (173 aa).

Met-1 carries the post-translational modification N-acetylmethionine. The required for complex formation with BFSP1 and BFSP2 stretch occupies residues 1 to 63; sequence MDVTIQHPWF…RTVLDSGISE (63 aa). Deamidated glutamine; partial is present on Gln-6. The residue at position 45 (Ser-45) is a Phosphoserine. Gln-50 carries the post-translational modification Deamidated glutamine; partial. The sHSP domain occupies 52 to 162; sequence LFRTVLDSGI…GHSERAIPVS (111 aa). Lys-70 carries the N6-acetyllysine modification. At Gln-90 the chain carries Deamidated glutamine; partial. Lys-99 bears the N6-acetyllysine mark. Residues His-100, Glu-102, and His-107 each coordinate Zn(2+). Residue Ser-122 is modified to Phosphoserine. Asn-123 carries the deamidated asparagine; partial modification. The disordered stretch occupies residues 145 to 173; sequence KVQSGLDAGHSERAIPVSREEKPSSAPSS. Position 147 is a deamidated glutamine; partial (Gln-147). Positions 153 to 167 are enriched in basic and acidic residues; it reads GHSERAIPVSREEKP. His-154 contacts Zn(2+). O-linked (GlcNAc) serine glycosylation occurs at Ser-162.

Belongs to the small heat shock protein (HSP20) family. Heteromer composed of three CRYAA and one CRYAB subunits. Inter-subunit bridging via zinc ions enhances stability, which is crucial as there is no protein turn over in the lens. Can also form homodimers and homotetramers (dimers of dimers) which serve as the building blocks of homooligomers. Within homooligomers, the zinc-binding motif is created from residues of 3 different molecules. His-100 and Glu-102 from one molecule are ligands of the zinc ion, and His-107 and His-154 residues from additional molecules complete the site with tetrahedral coordination geometry. Part of a complex required for lens intermediate filament formation composed of BFSP1, BFSP2 and CRYAA. In terms of processing, acetylation at Lys-70 may increase chaperone activity. Post-translationally, undergoes age-dependent proteolytical cleavage at the C-terminus.

It is found in the cytoplasm. The protein localises to the nucleus. Contributes to the transparency and refractive index of the lens. Acts as a chaperone, preventing aggregation of various proteins under a wide range of stress conditions. Required for the correct formation of lens intermediate filaments as part of a complex composed of BFSP1, BFSP2 and CRYAA. This chain is Alpha-crystallin A chain (CRYAA), found in Ochotona princeps (Southern American pika).